The primary structure comprises 220 residues: Glutathione S-transferase U23 (220 aa).

Residues 3 to 82 form the GST N-terminal domain; that stretch reads EEIILLDYWA…YIDELWPDTN (80 aa). Glutathione-binding positions include 13–14, 39–40, 53–54, and 66–67; these read SM, NK, KI, and ES. A GST C-terminal domain is found at 88 to 208; sequence DPYQRAQARF…LPDSDKVLKS (121 aa).

This sequence belongs to the GST superfamily. Tau family.

It localises to the cytoplasm. Its subcellular location is the cytosol. It catalyses the reaction RX + glutathione = an S-substituted glutathione + a halide anion + H(+). Functionally, may be involved in the conjugation of reduced glutathione to a wide number of exogenous and endogenous hydrophobic electrophiles and have a detoxification role against certain herbicides. The chain is Glutathione S-transferase U23 (GSTU23) from Arabidopsis thaliana (Mouse-ear cress).